Consider the following 97-residue polypeptide: Mapk-regulated corepressor-interacting protein 1 (97 aa).

Residues 1–29 (MTSSPVSRVVYNGKRNSSPRSPTNSSEIF) form a disordered region. Residues 15-26 (RNSSPRSPTNSS) show a composition bias toward low complexity. The residue at position 21 (Ser-21) is a Phosphoserine. Phosphothreonine is present on Thr-30. The residue at position 41 (Tyr-41) is a Phosphotyrosine. The residue at position 79 (Lys-79) is an N6-acetyllysine. The PXDLS motif motif lies at 80–84 (PIDLS).

It belongs to the MCRIP family. As to quaternary structure, interacts (unphosphorylated form, via the PXDLS motif) with CTBP1, competitively inhibiting CTBP-ZEB1 interaction. Interacts with CTBP2. Interacts with MCRIP2. Interacts with DDX6. Post-translationally, phosphorylation by MAPK3/1 (ERK1/2) regulates MCRIP1 binding to CTBP(s). In terms of tissue distribution, widely expressed (at protein level).

It localises to the nucleus. The protein localises to the cytoplasm. Its subcellular location is the stress granule. Functionally, the phosphorylation status of MCRIP1 functions as a molecular switch to regulate epithelial-mesenchymal transition. Unphosphorylated MCRIP1 binds to and inhibits the transcriptional corepressor CTBP(s). When phosphorylated by MAPK/ERK, MCRIP1 releases CTBP(s) resulting in transcriptional silencing of the E-cadherin gene and induction of epithelial-mesenchymal transition. This chain is Mapk-regulated corepressor-interacting protein 1 (Mcrip1), found in Mus musculus (Mouse).